A 295-amino-acid chain; its full sequence is GTPase Era (295 aa).

An Era-type G domain is found at 4–171 (KSGFVTIIGR…IKQIVSFLPE (168 aa)). Residues 12 to 19 (GRPNVGKS) form a G1 region. GTP is bound at residue 12–19 (GRPNVGKS). A G2 region spans residues 38–42 (QTTRN). The tract at residues 59–62 (DTPG) is G3. Residues 59 to 63 (DTPGI) and 121 to 124 (NKID) each bind GTP. The G4 stretch occupies residues 121–124 (NKID). A G5 region spans residues 150-152 (ISA). One can recognise a KH type-2 domain in the interval 202-280 (LDQEIPHGIA…FLELWVKVNE (79 aa)).

This sequence belongs to the TRAFAC class TrmE-Era-EngA-EngB-Septin-like GTPase superfamily. Era GTPase family. As to quaternary structure, monomer.

The protein resides in the cytoplasm. The protein localises to the cell membrane. In terms of biological role, an essential GTPase that binds both GDP and GTP, with rapid nucleotide exchange. Plays a role in 16S rRNA processing and 30S ribosomal subunit biogenesis and possibly also in cell cycle regulation and energy metabolism. This is GTPase Era from Alkaliphilus metalliredigens (strain QYMF).